A 218-amino-acid chain; its full sequence is Cytidylate kinase (218 aa).

10–18 (GPAGSGKST) contacts ATP.

Belongs to the cytidylate kinase family. Type 1 subfamily.

The protein resides in the cytoplasm. The enzyme catalyses CMP + ATP = CDP + ADP. It carries out the reaction dCMP + ATP = dCDP + ADP. In Fusobacterium nucleatum subsp. nucleatum (strain ATCC 25586 / DSM 15643 / BCRC 10681 / CIP 101130 / JCM 8532 / KCTC 2640 / LMG 13131 / VPI 4355), this protein is Cytidylate kinase.